The sequence spans 281 residues: CCAAT/enhancer-binding protein epsilon (281 aa).

The interval 1-30 is disordered; it reads MSHGTYYECEPRGGQQPLEFSGGRAGPGEL. A Glycyl lysine isopeptide (Lys-Gly) (interchain with G-Cter in SUMO2) cross-link involves residue Lys-121. Ser-181 bears the Phosphoserine mark. A bZIP domain is found at 204–267; sequence SLEYRLRRER…DTLRNLFRQI (64 aa). Residues 208 to 245 form a basic motif region; sequence RLRRERNNIAVRKSRDKAKRRIMETQQKVLEYMAENER. The leucine-zipper stretch occupies residues 246 to 267; that stretch reads LRNRVDQLTQELDTLRNLFRQI.

This sequence belongs to the bZIP family. C/EBP subfamily. As to quaternary structure, binds DNA as a homodimer and as a heterodimer. Can form stable heterodimers with CEBPA, CEBPB and CEBPD. Interacts with GATA1 and SPI1. Interacts with SMARCD2. Phosphorylated.

Its subcellular location is the nucleus. Transcriptional activator. C/EBP are DNA-binding proteins that recognize two different motifs: the CCAAT homology common to many promoters and the enhanced core homology common to many enhancers. Required for the promyelocyte-myelocyte transition in myeloid differentiation. The protein is CCAAT/enhancer-binding protein epsilon (Cebpe) of Mus musculus (Mouse).